The chain runs to 370 residues: MRDIDPSLRREIESLERFLKVKPLYFDFDEGVFVWLDTRLIPFREVYRRTSDYRRVARAIVDMEIRGAPAIGVAAAYALALAAAEAASRGGEGFIEALSEARREIESTRPTAYNLFWATARVYGAVSEAFRRSGVDAAVRAGLEEATRIYVEDVRGNVEIGRVGARLLESGDTVLTHCNTGALATAGFGTALGVIRYAWMEGKDIRVITTETRPVLQGARLNVWELRKEGIPFKLVVDSAVGLIMSRGMVSKAIVGADRIVSTGHTANKIGTYMVAMAASRHGVPFYVAAPASTFQPDAGPEAIVIEERSPDEVRGVISEAGYVRITLGDVEAYNPSFDVTPPELITAFITDRGVIEPPFDVNIRRTLED.

Substrate contacts are provided by residues 66–68 (RGA), Arg109, and Gln217. The active-site Proton donor is the Asp258. Residue 268-269 (NK) participates in substrate binding.

It belongs to the eIF-2B alpha/beta/delta subunits family. MtnA subfamily.

The enzyme catalyses 5-(methylsulfanyl)-alpha-D-ribose 1-phosphate = 5-(methylsulfanyl)-D-ribulose 1-phosphate. Catalyzes the interconversion of methylthioribose-1-phosphate (MTR-1-P) into methylthioribulose-1-phosphate (MTRu-1-P). The sequence is that of Putative methylthioribose-1-phosphate isomerase from Aeropyrum pernix (strain ATCC 700893 / DSM 11879 / JCM 9820 / NBRC 100138 / K1).